A 192-amino-acid chain; its full sequence is MITIGILDLQGDVEEHQIITEKALKEMKIDGTTKLVNTLDDIKDCNGLIISGGESSTIGMHLEKTGLSNYLKETGIPILGTCAGLVLLSKKTDQDQPLLGLIDSTVKRNGFGRQRMSFESEIKFNNEDYHGIFIRAPYISQISDDVEVLSKYDDKIIAVKQNQYIGIAFHPELTEDTLIHKLFILEVESCVV.

Residue 53–55 (GES) participates in L-glutamine binding. Residue Cys82 is the Nucleophile of the active site. Residues Arg108 and 134–135 (IR) each bind L-glutamine. Catalysis depends on charge relay system residues His170 and Glu172.

It belongs to the glutaminase PdxT/SNO family. In the presence of PdxS, forms a dodecamer of heterodimers. Only shows activity in the heterodimer.

The catalysed reaction is aldehydo-D-ribose 5-phosphate + D-glyceraldehyde 3-phosphate + L-glutamine = pyridoxal 5'-phosphate + L-glutamate + phosphate + 3 H2O + H(+). It catalyses the reaction L-glutamine + H2O = L-glutamate + NH4(+). The protein operates within cofactor biosynthesis; pyridoxal 5'-phosphate biosynthesis. Its function is as follows. Catalyzes the hydrolysis of glutamine to glutamate and ammonia as part of the biosynthesis of pyridoxal 5'-phosphate. The resulting ammonia molecule is channeled to the active site of PdxS. The polypeptide is Pyridoxal 5'-phosphate synthase subunit PdxT (Methanosphaera stadtmanae (strain ATCC 43021 / DSM 3091 / JCM 11832 / MCB-3)).